Reading from the N-terminus, the 399-residue chain is Phosphoglycerate kinase (399 aa).

Substrate contacts are provided by residues 22–24 (DFN), Arg-38, 61–64 (HLGR), Arg-120, and Arg-153. ATP-binding positions include Lys-204, Glu-326, and 352–355 (GGDT).

It belongs to the phosphoglycerate kinase family. Monomer.

It localises to the cytoplasm. The enzyme catalyses (2R)-3-phosphoglycerate + ATP = (2R)-3-phospho-glyceroyl phosphate + ADP. It functions in the pathway carbohydrate degradation; glycolysis; pyruvate from D-glyceraldehyde 3-phosphate: step 2/5. The chain is Phosphoglycerate kinase from Geotalea uraniireducens (strain Rf4) (Geobacter uraniireducens).